The following is a 320-amino-acid chain: Sensor histidine kinase YbdK (320 aa).

A helical membrane pass occupies residues 1–21 (MLLFTAVISVPMLLLAVSVLM). Over 22 to 41 (SVIYDSMFKPMNHGMPFHRS) the chain is Extracellular. The helical transmembrane segment at 42 to 62 (FAYPAMIVVFLISLLLLAFLF) threads the bilayer. Over 63–320 (SKSIHSLLHK…NGTGFLFSKE (258 aa)) the chain is Cytoplasmic. The HAMP domain occupies 67–120 (HSLLHKINLLNQTIRHLASDQRVPDKIEVKRADEIGELIKSVNLLIERTTYREL). Residues 135–320 (KLRHDINTPL…NGTGFLFSKE (186 aa)) enclose the Histidine kinase domain. His138 carries the post-translational modification Phosphohistidine; by autocatalysis.

The protein localises to the cell membrane. The catalysed reaction is ATP + protein L-histidine = ADP + protein N-phospho-L-histidine.. In terms of biological role, member of the two-component regulatory system YbdK/YbdJ. Probably activates YbdJ by phosphorylation. The chain is Sensor histidine kinase YbdK (ybdK) from Bacillus subtilis (strain 168).